A 459-amino-acid chain; its full sequence is tRNA modification GTPase MnmE (459 aa).

(6S)-5-formyl-5,6,7,8-tetrahydrofolate contacts are provided by arginine 29, glutamate 91, and arginine 130. Residues 225–381 (GVKVAIVGRP…LEEALEQLVT (157 aa)) form the TrmE-type G domain. K(+) is bound at residue asparagine 235. Residues 235–240 (NVGKSS), 254–260 (TDLPGTT), and 279–282 (DTAG) contribute to the GTP site. Mg(2+) is bound at residue serine 239. K(+)-binding residues include threonine 254, leucine 256, and threonine 259. Threonine 260 serves as a coordination point for Mg(2+). Residue lysine 459 participates in (6S)-5-formyl-5,6,7,8-tetrahydrofolate binding.

This sequence belongs to the TRAFAC class TrmE-Era-EngA-EngB-Septin-like GTPase superfamily. TrmE GTPase family. Homodimer. Heterotetramer of two MnmE and two MnmG subunits. K(+) serves as cofactor.

Its subcellular location is the cytoplasm. In terms of biological role, exhibits a very high intrinsic GTPase hydrolysis rate. Involved in the addition of a carboxymethylaminomethyl (cmnm) group at the wobble position (U34) of certain tRNAs, forming tRNA-cmnm(5)s(2)U34. This Synechococcus sp. (strain JA-2-3B'a(2-13)) (Cyanobacteria bacterium Yellowstone B-Prime) protein is tRNA modification GTPase MnmE.